The chain runs to 602 residues: Leucine-rich repeat-containing protein 40 (602 aa).

Residues 1–26 are disordered; it reads MSRHMRAPRFDPRAGFHAEGKDRGPS. Residues 8–24 are compositionally biased toward basic and acidic residues; that stretch reads PRFDPRAGFHAEGKDRG. One copy of the LRR 1 repeat lies at 35–58; the sequence is ARSSGQLNLAGRNLGEVPQCVWRI. The residue at position 71 (S71) is a Phosphoserine. 20 LRR repeats span residues 81 to 103, 104 to 126, 127 to 149, 150 to 172, 174 to 195, 196 to 219, 221 to 241, 242 to 266, 268 to 287, 288 to 310, 311 to 334, 336 to 356, 398 to 421, 424 to 447, 449 to 470, 471 to 494, 496 to 517, 519 to 540, 541 to 564, and 566 to 587; these read QTDL…DLRL, LPAL…AIRE, LDNL…EITS, LKNL…GFEH, SCLE…DFAL, LSSL…ISRM, RLKH…DVGS, MESL…SCRQ, KELH…HLQH, LQAI…EMAL, LQSL…LGNL, LKFL…IIAK, IATL…LFDA, TTLI…IVEL, EMVL…ELCL, LQKL…MSSL, KLQT…LYRI, TLEA…KMKL, MENL…LGNC, and QLRT…ILMK.

The polypeptide is Leucine-rich repeat-containing protein 40 (Lrrc40) (Mus musculus (Mouse)).